The following is an 824-amino-acid chain: Dapper 1-B (824 aa).

Disordered regions lie at residues 1–33 (MKPIPAAPEPLGQHQDSPRRKDKGEAESERQRT), 131–150 (EEHLETDSRPSSGFYELSDG), and 515–534 (HASSSFDERPPLDFKSEGSS). The segment at 2–343 (KPIPAAPEPL…PVRTNKPRTS (342 aa)) is interaction with tcf7l1-A. Over residues 16–33 (DSPRRKDKGEAESERQRT) the composition is skewed to basic and acidic residues. Positions 84–139 (EEKFLEDNILLLKKQLNCLRKRDAGLLSQLHELDKQINDLRIDVEKTEEHLETDSR) form a coiled coil. The segment covering 520–530 (FDERPPLDFKS) has biased composition (basic and acidic residues). The PDZ-binding motif lies at 821 to 824 (MTTV).

It belongs to the dapper family. In terms of assembly, interacts with dbf4 and tcf7l1-A. Interacts with dvl2/dsh; the interaction is required for dact1-b phosphorylation by CaMK1D and seems to become disrupted by the phosphorylation. Phosphorylated by CaMK1D; the phosphorylation requires binding to dvl2/dsh. In terms of tissue distribution, expressed both in the dorsal lip in early gastrula and throughout the posterior presumptive ectoderm in early neurula. Expressed in the dorsal neural folds at the tailbud stage and highly expressed in the tadpole head, including the brain, retina and cartilaginous branchial arch derivatives.

It is found in the cytoplasm. The protein localises to the nucleus. In terms of biological role, involved in regulation of intracellular signaling pathways during development. Specifically thought to play a role in canonical and/or non-canonical Wnt signaling pathways through interaction with DSH (Dishevelled) family proteins. Binds to dvl2 to regulate the degradation of beta-catenin (ctnnb1-A and possibly ctnnb1-B), thereby modulating the transcriptional activation of target genes of the Wnt signaling pathway. Seems to promote beta-catenin degradation if not phosphorylated and to block beta-catenin degradation if phosphorylated by CaMK1D. Involved in regulation of catenin delta/ctnnd1 protein level. May also bind to and directly stimulate the activity of tcf7l1-A. Also regulates the activation by dvl2 of jnk, a component of ctnnb1/beta-catenin-independent frizzled signaling. Required for notochord and head formation. The protein is Dapper 1-B (dact1-b) of Xenopus laevis (African clawed frog).